The following is a 172-amino-acid chain: MLSWYKAQLAARPLLTQAVTTSILFGVGDVAAQQLVDRRGLSNHDLTRTGRMVLYGGAVFGPAATTWFRFLQKRVVVPGSTNKTILARVAADQGLFAPTFIGIFLGSMAVLEGTDVKEKLQKNYWEALSTNWMVWPFVQMVNFKVVPLDHRVLFVNVISIGWNCYLSWLNGQ.

5 consecutive transmembrane segments (helical) span residues 13-33 (PLLT…VAAQ), 52-72 (MVLY…RFLQ), 94-114 (GLFA…LEGT), 128-148 (LSTN…VVPL), and 152-172 (VLFV…LNGQ).

This sequence belongs to the peroxisomal membrane protein PXMP2/4 family.

The protein resides in the mitochondrion inner membrane. Functionally, may be involved in cellular response to stress. Required to maintain mitochondrial DNA (mtDNA) integrity and stability. The protein is Protein sym-1 (sym-1) of Neurospora crassa (strain ATCC 24698 / 74-OR23-1A / CBS 708.71 / DSM 1257 / FGSC 987).